Consider the following 131-residue polypeptide: MWKEFKEFAMRGNVVDLAVGVIIGGAFGKIVSSLVNDILMPLVGLLLGGVDFSGLSWKFGKAVVKYGMFIQTVVDFFIISFSIFVFVKVLNKLYWHNKKEEEIKDTAPTLTKEEELLMEIRDLLKQQRETR.

A run of 3 helical transmembrane segments spans residues 8–28 (FAMR…GAFG), 30–50 (IVSS…LGGV), and 67–87 (GMFI…FVFV).

This sequence belongs to the MscL family. Homopentamer.

The protein resides in the cell membrane. In terms of biological role, channel that opens in response to stretch forces in the membrane lipid bilayer. May participate in the regulation of osmotic pressure changes within the cell. The chain is Large-conductance mechanosensitive channel from Geobacillus sp. (strain WCH70).